Consider the following 756-residue polypeptide: Deoxynucleotidyltransferase terminal-interacting protein 2 (756 aa).

The interval 1–99 (MVVTRSARAK…AESNYSVSEH (99 aa)) is disordered. Residues 9–21 (AKASIQAASAESS) show a composition bias toward low complexity. S21 is modified (phosphoserine). Composition is skewed to polar residues over residues 35-55 (PESS…TGKQ) and 80-96 (EPST…NYSV). S117 carries the phosphoserine modification. A Phosphothreonine modification is found at T129. Phosphoserine is present on residues S141, S145, S148, S184, and S194. The segment at 156-261 (PTEKTTGARR…LSEINKPNFY (106 aa)) is disordered. A compositionally biased stretch (basic residues) spans 201–211 (RRTRSMQRKLK). Residues K217 and K220 each participate in a glycyl lysine isopeptide (Lys-Gly) (interchain with G-Cter in SUMO2) cross-link. At T232 the chain carries Phosphothreonine. S239, S251, and S253 each carry phosphoserine. The span at 242–256 (RQTSHLQARSLSEIN) shows a compositional bias: polar residues. Glycyl lysine isopeptide (Lys-Gly) (interchain with G-Cter in SUMO2) cross-links involve residues K257, K316, and K321. S324 and S330 each carry phosphoserine. Residue K345 forms a Glycyl lysine isopeptide (Lys-Gly) (interchain with G-Cter in SUMO2) linkage. S381 bears the Phosphoserine mark. K384 participates in a covalent cross-link: Glycyl lysine isopeptide (Lys-Gly) (interchain with G-Cter in SUMO2). S434 and S512 each carry phosphoserine. A coiled-coil region spans residues 505-542 (LEEEDKASEVAIEEEKEEEEDEKSEEDSSDHDENEDEF). A disordered region spans residues 510-547 (KASEVAIEEEKEEEEDEKSEEDSSDHDENEDEFSDEED). Positions 548-605 (FLNSTKAKLLKLTSSSIDPGLSIKQLGGLYINFNADKLQSNKRTLTQIKEKKKNELLQ) are tdBR region; mediates interaction with DNTT. Residue K558 forms a Glycyl lysine isopeptide (Lys-Gly) (interchain with G-Cter in SUMO2) linkage. S569 is subject to Phosphoserine. Glycyl lysine isopeptide (Lys-Gly) (interchain with G-Cter in SUMO2) cross-links involve residues K584 and K606. The residue at position 610 (T610) is a Phosphothreonine. Residues K626, K649, K658, K686, and K731 each participate in a glycyl lysine isopeptide (Lys-Gly) (interchain with G-Cter in SUMO2) cross-link.

As to quaternary structure, forms a ternary complex with DNTT and core histone; interaction with PCNA releases DNTT and H2A/H2B histones from this ternary complex. Interacts with ESR1, ESR2, PPARG and RXRA. Part of the small subunit (SSU) processome, composed of more than 70 proteins and the RNA chaperone small nucleolar RNA (snoRNA) U3. Widely expressed with higher levels in testis.

Its subcellular location is the nucleus. The protein resides in the nucleolus. In terms of biological role, regulates the transcriptional activity of DNTT and ESR1. May function as a chromatin remodeling protein. Part of the small subunit (SSU) processome, first precursor of the small eukaryotic ribosomal subunit. During the assembly of the SSU processome in the nucleolus, many ribosome biogenesis factors, an RNA chaperone and ribosomal proteins associate with the nascent pre-rRNA and work in concert to generate RNA folding, modifications, rearrangements and cleavage as well as targeted degradation of pre-ribosomal RNA by the RNA exosome. The polypeptide is Deoxynucleotidyltransferase terminal-interacting protein 2 (Homo sapiens (Human)).